The following is a 115-amino-acid chain: Large ribosomal subunit protein uL22 (115 aa).

Belongs to the universal ribosomal protein uL22 family. As to quaternary structure, part of the 50S ribosomal subunit.

Its function is as follows. This protein binds specifically to 23S rRNA; its binding is stimulated by other ribosomal proteins, e.g. L4, L17, and L20. It is important during the early stages of 50S assembly. It makes multiple contacts with different domains of the 23S rRNA in the assembled 50S subunit and ribosome. Functionally, the globular domain of the protein is located near the polypeptide exit tunnel on the outside of the subunit, while an extended beta-hairpin is found that lines the wall of the exit tunnel in the center of the 70S ribosome. The polypeptide is Large ribosomal subunit protein uL22 (Streptomyces avermitilis (strain ATCC 31267 / DSM 46492 / JCM 5070 / NBRC 14893 / NCIMB 12804 / NRRL 8165 / MA-4680)).